Here is a 218-residue protein sequence, read N- to C-terminus: Thiopurine S-methyltransferase (218 aa).

Residues Trp10, Leu45, Glu66, and Arg123 each coordinate S-adenosyl-L-methionine.

The protein belongs to the class I-like SAM-binding methyltransferase superfamily. TPMT family.

The protein resides in the cytoplasm. The enzyme catalyses S-adenosyl-L-methionine + a thiopurine = S-adenosyl-L-homocysteine + a thiopurine S-methylether.. This Pseudomonas aeruginosa (strain UCBPP-PA14) protein is Thiopurine S-methyltransferase.